The following is a 421-amino-acid chain: Serine hydroxymethyltransferase (421 aa).

Residues L121 and 125–127 contribute to the (6S)-5,6,7,8-tetrahydrofolate site; that span reads GHL. K230 bears the N6-(pyridoxal phosphate)lysine mark. (6S)-5,6,7,8-tetrahydrofolate-binding positions include E246 and 354 to 356; that span reads SPF.

This sequence belongs to the SHMT family. As to quaternary structure, homodimer. Pyridoxal 5'-phosphate is required as a cofactor.

The protein resides in the cytoplasm. The enzyme catalyses (6R)-5,10-methylene-5,6,7,8-tetrahydrofolate + glycine + H2O = (6S)-5,6,7,8-tetrahydrofolate + L-serine. Its pathway is one-carbon metabolism; tetrahydrofolate interconversion. It functions in the pathway amino-acid biosynthesis; glycine biosynthesis; glycine from L-serine: step 1/1. Catalyzes the reversible interconversion of serine and glycine with tetrahydrofolate (THF) serving as the one-carbon carrier. This reaction serves as the major source of one-carbon groups required for the biosynthesis of purines, thymidylate, methionine, and other important biomolecules. Also exhibits THF-independent aldolase activity toward beta-hydroxyamino acids, producing glycine and aldehydes, via a retro-aldol mechanism. The polypeptide is Serine hydroxymethyltransferase (Rickettsia felis (strain ATCC VR-1525 / URRWXCal2) (Rickettsia azadi)).